A 146-amino-acid polypeptide reads, in one-letter code: Hemoglobin subunit beta (146 aa).

An N-acetylvaline modification is found at Val1. In terms of domain architecture, Globin spans 2-146 (HLTAEEKAAV…VANALAHKYH (145 aa)). Phosphothreonine is present on Thr12. At Ser44 the chain carries Phosphoserine. An N6-acetyllysine modification is found at Lys59. His63 is a binding site for heme b. At Lys82 the chain carries N6-acetyllysine. His92 is a binding site for heme b. Cys93 is subject to S-nitrosocysteine. N6-acetyllysine is present on Lys144.

This sequence belongs to the globin family. In terms of assembly, heterotetramer of two alpha chains and two beta chains. As to expression, red blood cells.

Functionally, involved in oxygen transport from the lung to the various peripheral tissues. The chain is Hemoglobin subunit beta (HBB) from Mellivora capensis (Ratel).